A 190-amino-acid polypeptide reads, in one-letter code: Large ribosomal subunit protein bL25 (190 aa).

Belongs to the bacterial ribosomal protein bL25 family. CTC subfamily. Part of the 50S ribosomal subunit; part of the 5S rRNA/L5/L18/L25 subcomplex. Contacts the 5S rRNA. Binds to the 5S rRNA independently of L5 and L18.

This is one of the proteins that binds to the 5S RNA in the ribosome where it forms part of the central protuberance. This is Large ribosomal subunit protein bL25 from Neisseria meningitidis serogroup C / serotype 2a (strain ATCC 700532 / DSM 15464 / FAM18).